The chain runs to 559 residues: Phenylalanine--tRNA ligase beta subunit (559 aa).

One can recognise a B5 domain in the interval 274–350 (FEPKIIDVHT…LGYGFNELPA (77 aa)). The Mg(2+) site is built by Asp-328, Asp-334, Glu-337, and Asn-338.

Belongs to the phenylalanyl-tRNA synthetase beta subunit family. Type 2 subfamily. As to quaternary structure, tetramer of two alpha and two beta subunits. Requires Mg(2+) as cofactor.

The protein localises to the cytoplasm. The enzyme catalyses tRNA(Phe) + L-phenylalanine + ATP = L-phenylalanyl-tRNA(Phe) + AMP + diphosphate + H(+). This chain is Phenylalanine--tRNA ligase beta subunit, found in Methanosphaera stadtmanae (strain ATCC 43021 / DSM 3091 / JCM 11832 / MCB-3).